Reading from the N-terminus, the 295-residue chain is 33 kDa chaperonin (295 aa).

Cystine bridges form between Cys238–Cys240 and Cys271–Cys274.

This sequence belongs to the HSP33 family. In terms of processing, under oxidizing conditions two disulfide bonds are formed involving the reactive cysteines. Under reducing conditions zinc is bound to the reactive cysteines and the protein is inactive.

It is found in the cytoplasm. Redox regulated molecular chaperone. Protects both thermally unfolding and oxidatively damaged proteins from irreversible aggregation. Plays an important role in the bacterial defense system toward oxidative stress. The protein is 33 kDa chaperonin of Levilactobacillus brevis (strain ATCC 367 / BCRC 12310 / CIP 105137 / JCM 1170 / LMG 11437 / NCIMB 947 / NCTC 947) (Lactobacillus brevis).